The following is a 975-amino-acid chain: MKLEHPDRLMNRTPLSLAALETHDAFAERHIGPDAASQQAMLDTLGFASRAALIDAVIPASIRRAETLPLGPFAQPKSEAEALAALRALADKNQVFRSYIGQGYHDTHTPAVILRNVLENPAWYTAYTPYQPEISQGRLEALLNFQQMVADLTGLAISNASLLDEATAAAEAMTLLQRTGKPKSNVFYVADDVLPQTLEVIRTRALPIGIEVKTGPAADAAQANAFGVLLQYPGVNGDVRDYRALTDAIHAAGGHVVVAADLLALTVLTPPGEWGADVAIGNTQRFGVPMGFGGPHAAYLAVRDEFKRQMPGRLVGVTVDAQGKPALRLALQTREQHIRREKATSNVCTAQALLAIMASMYAVYHGPHGLKTIALRVNRIAALLAAGVKQLGFATVNDTFFDTLTIDTGARTAQVHEFAKAKRINLRRVSDTQVGVSVDETTTRDDLADLLDVFAQAAGGTAPAVDALDAGLAGVAALPAGLERTSAYLTHHVFNRHHSETEMLRYLRSLSDKDLALDRSMIPLGSCTMKLNATSEMLPVTWPEFGGIHPFAPAEQTVGYREMIDQLEEMLVAATGYAAVSLQPNAGSQGEYAGLLIIHAYHASRGEGHRDVCLIPASAHGTNPASAHMAGMKVVVVACDAQGNVDIADLKAKAEQHSANLAAIMITYPSTHGVFEQNVREICEIVHAHGGQVYVDGANMNAMVGLTAPGQFGGDVSHLNLHKTFCIPHGGGGPGVGPVAVGAHLAKFLPNQRSTGYARAEDGIGAVSAAPYGSASILPISWMYIAMMGAKNLTAATETAILNANYIAKRLAPHYPVLYSGPGGLVAHECILDLRPIKETSGISVDDVAKRLMDYGFHAPTMSFPVPGTLMVEPTESESQEELDRFIAAMIAIREEIRAVEEGRADREDNPLRHAPHTAAVVTANEWPHAYSREQAAYPVASLGTNKYWPPVGRADNAYGDRNLFCSCVPMSDYA.

Residue Lys723 is modified to N6-(pyridoxal phosphate)lysine.

The protein belongs to the GcvP family. As to quaternary structure, the glycine cleavage system is composed of four proteins: P, T, L and H. It depends on pyridoxal 5'-phosphate as a cofactor.

It carries out the reaction N(6)-[(R)-lipoyl]-L-lysyl-[glycine-cleavage complex H protein] + glycine + H(+) = N(6)-[(R)-S(8)-aminomethyldihydrolipoyl]-L-lysyl-[glycine-cleavage complex H protein] + CO2. Functionally, the glycine cleavage system catalyzes the degradation of glycine. The P protein binds the alpha-amino group of glycine through its pyridoxal phosphate cofactor; CO(2) is released and the remaining methylamine moiety is then transferred to the lipoamide cofactor of the H protein. This chain is Glycine dehydrogenase (decarboxylating), found in Burkholderia cenocepacia (strain HI2424).